Here is a 443-residue protein sequence, read N- to C-terminus: Citrate transporter CitP (443 aa).

The next 13 helical transmembrane spans lie at 27-47 (ISGIGLVRYAFMAVLLIIAIS), 59-79 (IFALVLMGHVFYYLGAHLPIF), 83-103 (LGGGSVFTILLTAILVATNVM), 114-134 (FINGMDFLGLYIVSLIASSLF), 151-171 (VAFISMALTAVVIGIVGVIIG), 177-197 (AILYIAMPIMAGGVGAGIVPL), 209-229 (SAGILSKLFPTVILGNLLAII), 268-288 (YVQLGVGLIIAVMFFMIGTML), 294-314 (GINAYAFIILSIVLTKAFGLL), 322-342 (VIMFGQVIVKNMTHALLAGVG), 350-370 (VLLAALSWQFVVLCLVSIVAI), 388-410 (AAITAGLANNSMGGTGNVAVLAA), and 422-442 (MGNRIGGALILVVAGILVTFM).

The protein belongs to the 2-hydroxycarboxylate transporter (2-HCT) (TC 2.A.24) family.

Its subcellular location is the cell membrane. The catalysed reaction is (R)-lactate(in) + citrate(out) = (R)-lactate(out) + citrate(in). It carries out the reaction (S)-lactate(in) + citrate(out) = (S)-lactate(out) + citrate(in). It catalyses the reaction citrate(in) + H(+)(in) = citrate(out) + H(+)(out). Uptake of citrate is not affected by the absence or presence of Na(+) up to 25 mM and is increasingly inhibited by increasing Mg(2+) concentrations. In terms of biological role, secondary transporter involved in citrate metabolism. During cometabolism of citrate and glucose, catalyzes the uptake of divalent citrate into the cell coupled to the exit of monovalent lactate, a product of citrate fermentation during citrate-glucose cometabolism (precursor/product exchange). The citrate/lactate exchange is electrogenic and results in the generation of a membrane potential. In the absence of glucose, i.e. when no lactate is produced, CitP catalyzes the proton-dependent transport of citrate and malate. Transports the divalent form of citrate and malate with the concomitant uptake of one proton, therefore translocating a single unit of negative charge across the membrane. In vitro, transports a range of substrates that contain the 2-hydroxycarboxylate motif, HO-CR(2)-COO(-), with a preference for malate, citrate and monovalent 2-hydroxyisobutyrate. Modification of the OH or the COO(-) groups of the 2-hydroxycarboxylate motif drastically reduces the affinity of the transporter for the substrates, indicating their relevance in substrate recognition. Significant activity is also observed with some 2-oxocarboxylates and a 3-hydroxycarboxylate. The chain is Citrate transporter CitP from Leuconostoc mesenteroides subsp. mesenteroides.